A 427-amino-acid polypeptide reads, in one-letter code: MALRITRNTKISAENKAKISMAGAKRVPVAAVATSKPGLRPRTALGDIGNKVSEQPQAKLPLKKEAKTLASGKVTAKKVPKPLEKAPVPVPEPQPEPEPEPEHVKEDKLSPEPILVDTPSPSPMETSGCAPAEEYLCQAFSDVILAVSDVDAEDGADPNLCSEYVKDIYAYLRQLEEEQAVKPKYLMGREVTGNMRAILIDWLVQVQIKFRLLQETMYMTVSIIDRFMQDTYVPKKMLQLVGVTAMFVASKYEEMYPPEIGDFAFVTDNTYTKFQIRQMEMKILRALNFSLGRPLPLHFLRRASKIGEVDVELHTLAKYLMELTMLDYDMVHFPPSQIAAGAFCLALKVLDNGEWTPTLQHYLSYTEESLLVVMQHLAKNVVMVNRGLTKHMTIKNKYATSKHAKISTLAQLNSALVQDLAKAVAKV.

Residues 33 to 126 form a disordered region; it reads ATSKPGLRPR…DTPSPSPMET (94 aa). Residue Lys-73 is modified to N6-acetyllysine. A compositionally biased stretch (basic and acidic residues) spans 100–110; sequence EPEHVKEDKLS. A Phosphoserine; by CDK1 modification is found at Ser-120. At Ser-122 the chain carries Phosphoserine. Ser-127 carries the phosphoserine; by PLK1 modification. At Ser-141 the chain carries Phosphoserine. Interaction with CDK2 stretches follow at residues 163–171 and 252–255; these read EYVKDIYAY and YEEM. Position 315 is a phosphothreonine (Thr-315).

Belongs to the cyclin family. Cyclin AB subfamily. Interacts with the CDC2 protein kinase to form a serine/threonine kinase holoenzyme complex also known as maturation promoting factor (MPF). The cyclin subunit imparts substrate specificity to the complex. Binds HEI10. Interacts with catalytically active RALBP1 and CDC2 during mitosis to form an endocytotic complex during interphase. Interacts with CCNF; interaction is required for nuclear localization. Interacts with CDK5RAP3. Interacts with RFPL4A and UBE2A. Interacts with INCA1. Ubiquitinated by the SCF(NIPA) complex during interphase, leading to its destruction. Deubiquitinated by USP22 during G2/M phase. In terms of processing, phosphorylated by PLK1 at Ser-127 on centrosomes during prophase: phosphorylation by PLK1 does not cause nuclear import. Phosphorylation at Ser-141 was also reported to be mediated by PLK1 but Ser-127 seems to be the primary phosphorylation site.

It localises to the cytoplasm. It is found in the nucleus. The protein resides in the cytoskeleton. Its subcellular location is the microtubule organizing center. The protein localises to the centrosome. In terms of biological role, essential for the control of the cell cycle at the G2/M (mitosis) transition. The protein is G2/mitotic-specific cyclin-B1 (CCNB1) of Bos taurus (Bovine).